We begin with the raw amino-acid sequence, 121 residues long: Oxalate-binding protein (121 aa).

Positions 49–117 (RMKLPPGSSV…GNTDLEFLAV (69 aa)) constitute a Cupin type-2 domain. H61, H63, and E68 together coordinate Mn(2+). Residue Y70 participates in oxalate binding. H102 provides a ligand contact to Mn(2+).

Homodimer.

Its function is as follows. Binds oxalate. This Thermotoga maritima (strain ATCC 43589 / DSM 3109 / JCM 10099 / NBRC 100826 / MSB8) protein is Oxalate-binding protein.